Reading from the N-terminus, the 186-residue chain is MQTGKLIVLTGPSGVGKGTLLSCLLHRHPGLAFSVSVTTRSPRPGEVEGKSYFFVDHDQFREMIESEELLEWAEYAGNFYGTPRVPVIENIEQGRSMILEIELQGARQIQRTFPDALRIFILPPSMAELEERLWGRGQDSEEAITKRLQRATEELEAATEFDIQLVNDSIEDTLQNLDKILFHFRE.

In terms of domain architecture, Guanylate kinase-like spans 4 to 182; sequence GKLIVLTGPS…TLQNLDKILF (179 aa). ATP is bound at residue 11–18; the sequence is GPSGVGKG.

The protein belongs to the guanylate kinase family.

The protein resides in the cytoplasm. The enzyme catalyses GMP + ATP = GDP + ADP. Essential for recycling GMP and indirectly, cGMP. The protein is Guanylate kinase of Trichodesmium erythraeum (strain IMS101).